A 334-amino-acid polypeptide reads, in one-letter code: Tryptophan--tRNA ligase (334 aa).

ATP contacts are provided by residues 11–13 (QPS) and 19–20 (GN). The short motif at 12-20 (PSGELTIGN) is the 'HIGH' region element. L-tryptophan is bound at residue Asp135. Residues 147–149 (GDD), Ile186, and 195–199 (KMSKS) contribute to the ATP site. Residues 195–199 (KMSKS) carry the 'KMSKS' region motif.

It belongs to the class-I aminoacyl-tRNA synthetase family. As to quaternary structure, homodimer.

The protein resides in the cytoplasm. It carries out the reaction tRNA(Trp) + L-tryptophan + ATP = L-tryptophyl-tRNA(Trp) + AMP + diphosphate + H(+). Functionally, catalyzes the attachment of tryptophan to tRNA(Trp). This chain is Tryptophan--tRNA ligase, found in Haemophilus influenzae (strain ATCC 51907 / DSM 11121 / KW20 / Rd).